The following is a 450-amino-acid chain: Protein tweety homolog 1 (450 aa).

Residues 1-43 (MGAPPGYRPSAWVHLLHQLPRADFQLRPVPSGFAPQEQEYQQA) lie on the Extracellular side of the membrane. The chain crosses the membrane as a helical span at residues 44–64 (LLLVAALAGLGLGLSLIFIAV). Over 65 to 88 (YLIRFCCCRPPEPPGSKTPSPGGG) the chain is Cytoplasmic. The chain crosses the membrane as a helical span at residues 89-109 (CVTWSCIVALLAGCIGIGIGF). Residues 110 to 214 (YGNSETSDGV…DVSFVEEYRW (105 aa)) are Extracellular-facing. A glycan (N-linked (GlcNAc...) asparagine) is linked at N130. The chain crosses the membrane as a helical span at residues 215 to 235 (LAYVLLLLLELLVCLFTLLGL). The Cytoplasmic portion of the chain corresponds to 236–240 (AKQSK). A helical transmembrane segment spans residues 241-261 (WLVIVMTVMSLLVLVLSWGSM). Topologically, residues 262 to 390 (GLEAATAVGL…LRGLCEDALE (129 aa)) are extracellular. 2 N-linked (GlcNAc...) asparagine glycosylation sites follow: N284 and N355. C303 and C370 are oxidised to a cystine. A helical transmembrane segment spans residues 391–411 (GLLFLLLFSLLSAGALATALC). At 412-450 (SLPRAWALFPPSDDYDDTDDDDPFNPQESKRFVQWQSSI) the chain is on the cytoplasmic side. Residues 428-450 (DTDDDDPFNPQESKRFVQWQSSI) are disordered. S440 is modified (phosphoserine).

The protein belongs to the tweety family. As to quaternary structure, homotetramer; disulfide-linked. Homodimer. Post-translationally, N-glycosylated. Contains high-mannose, hybrid and complex oligosaccharides.

It is found in the cell membrane. The catalysed reaction is chloride(in) = chloride(out). The enzyme catalyses L-glutamate(out) = L-glutamate(in). Its function is as follows. Calcium-independent, swelling-dependent volume-regulated anion channel (VRAC-swell) which plays a pivotal role in the process of regulatory volume decrease (RVD) in the brain through the efflux of anions like chloride and organic osmolytes like glutamate. The polypeptide is Protein tweety homolog 1 (TTYH1) (Macaca fascicularis (Crab-eating macaque)).